The sequence spans 728 residues: Bacteriophytochrome (728 aa).

A tetrapyrrole is bound at residue Cys12. A chromophore binding domain region spans residues Ile17–Asn495. The 165-residue stretch at Asp139–Val303 folds into the GAF domain. In terms of domain architecture, Histidine kinase spans Val510–Gln721. His513 bears the Phosphohistidine; by autocatalysis mark.

This sequence in the N-terminal section; belongs to the phytochrome family. Contains one covalently linked tetrapyrrole chromophore.

The catalysed reaction is ATP + protein L-histidine = ADP + protein N-phospho-L-histidine.. Functionally, photoreceptor which exists in two forms that are reversibly interconvertible by light: the R form that absorbs maximally in the red region of the spectrum and the FR form that absorbs maximally in the far-red region. This Pseudomonas aeruginosa (strain ATCC 15692 / DSM 22644 / CIP 104116 / JCM 14847 / LMG 12228 / 1C / PRS 101 / PAO1) protein is Bacteriophytochrome (bphP).